The sequence spans 557 residues: NAC domain-containing protein 17 (557 aa).

The 151-residue stretch at 16–166 (SAPGFRFHPT…YYALYKLFKK (151 aa)) folds into the NAC domain. Residues 115-172 (VGLKKTLVFYRGRAPSGERTDWVMHEYTMDEDELGRCKNPQEYYALYKLFKKSGAGPK) mediate DNA binding. Residues 526-546 (FLLLSIVGALCAIFWVLVATV) traverse the membrane as a helical segment.

Expressed in roots, rosette leaves, cauline leaves, shoot apex, stems and flowers.

The protein resides in the endoplasmic reticulum membrane. It localises to the nucleus. In terms of biological role, transcriptional activator activated by proteolytic cleavage through regulated intramembrane proteolysis (RIP). Transcriptional activator that acts as a positive regulator of AOX1A during mitochondrial dysfunction. Binds directly to AOX1A promoter. Mediates mitochondrial retrograde signaling. This chain is NAC domain-containing protein 17, found in Arabidopsis thaliana (Mouse-ear cress).